A 522-amino-acid chain; its full sequence is Glucans biosynthesis protein G (522 aa).

The signal sequence occupies residues 1-33 (MLDNKFGFKQRVASLRWLSAAIMLSVSAVPAWA).

Belongs to the OpgD/OpgG family.

It localises to the periplasm. It functions in the pathway glycan metabolism; osmoregulated periplasmic glucan (OPG) biosynthesis. Its function is as follows. Involved in the biosynthesis of osmoregulated periplasmic glucans (OPGs). This Pectobacterium carotovorum subsp. carotovorum (strain PC1) protein is Glucans biosynthesis protein G.